A 1386-amino-acid polypeptide reads, in one-letter code: DNA-directed RNA polymerase subunit beta'' (1386 aa).

4 residues coordinate Zn(2+): C220, C289, C296, and C299.

The protein belongs to the RNA polymerase beta' chain family. RpoC2 subfamily. As to quaternary structure, in plastids the minimal PEP RNA polymerase catalytic core is composed of four subunits: alpha, beta, beta', and beta''. When a (nuclear-encoded) sigma factor is associated with the core the holoenzyme is formed, which can initiate transcription. It depends on Zn(2+) as a cofactor.

It is found in the plastid. The protein localises to the chloroplast. The enzyme catalyses RNA(n) + a ribonucleoside 5'-triphosphate = RNA(n+1) + diphosphate. Its function is as follows. DNA-dependent RNA polymerase catalyzes the transcription of DNA into RNA using the four ribonucleoside triphosphates as substrates. This is DNA-directed RNA polymerase subunit beta'' from Marchantia polymorpha (Common liverwort).